A 257-amino-acid polypeptide reads, in one-letter code: NAD-capped RNA hydrolase NudC (257 aa).

Arginine 69 serves as a coordination point for substrate. Residues cysteine 98 and cysteine 101 each contribute to the Zn(2+) site. Glutamate 111 lines the substrate pocket. Zn(2+)-binding residues include cysteine 116 and cysteine 119. Position 124 (tyrosine 124) interacts with substrate. The Nudix hydrolase domain maps to 125–248 (PQIAPCIIVA…TVARRLIEDT (124 aa)). A divalent metal cation is bound by residues alanine 158, glutamate 174, and glutamate 178. Positions 159 to 180 (GFVEVGETLEQAVAREVMEESG) match the Nudix box motif. Residue 192–199 (QPWPFPQS) participates in substrate binding. Glutamate 219 lines the a divalent metal cation pocket. Residue alanine 241 coordinates substrate.

Belongs to the Nudix hydrolase family. NudC subfamily. In terms of assembly, homodimer. The cofactor is Mg(2+). Mn(2+) serves as cofactor. Zn(2+) is required as a cofactor.

It catalyses the reaction a 5'-end NAD(+)-phospho-ribonucleoside in mRNA + H2O = a 5'-end phospho-adenosine-phospho-ribonucleoside in mRNA + beta-nicotinamide D-ribonucleotide + 2 H(+). The enzyme catalyses NAD(+) + H2O = beta-nicotinamide D-ribonucleotide + AMP + 2 H(+). It carries out the reaction NADH + H2O = reduced beta-nicotinamide D-ribonucleotide + AMP + 2 H(+). In terms of biological role, mRNA decapping enzyme that specifically removes the nicotinamide adenine dinucleotide (NAD) cap from a subset of mRNAs by hydrolyzing the diphosphate linkage to produce nicotinamide mononucleotide (NMN) and 5' monophosphate mRNA. The NAD-cap is present at the 5'-end of some mRNAs and stabilizes RNA against 5'-processing. Has preference for mRNAs with a 5'-end purine. Catalyzes the hydrolysis of a broad range of dinucleotide pyrophosphates. This is NAD-capped RNA hydrolase NudC from Salmonella typhimurium (strain LT2 / SGSC1412 / ATCC 700720).